The chain runs to 458 residues: A-type ATP synthase subunit B (458 aa).

Belongs to the ATPase alpha/beta chains family. In terms of assembly, has multiple subunits with at least A(3), B(3), C, D, E, F, H, I and proteolipid K(x).

Its subcellular location is the cell membrane. Its function is as follows. Component of the A-type ATP synthase that produces ATP from ADP in the presence of a proton gradient across the membrane. The B chain is a regulatory subunit. The sequence is that of A-type ATP synthase subunit B from Methanocella arvoryzae (strain DSM 22066 / NBRC 105507 / MRE50).